The primary structure comprises 300 residues: ETS homologous factor (300 aa).

Positions 29-115 constitute a PNT domain; it reads STCNVSSGFF…SNLQHLKWNG (87 aa). The disordered stretch occupies residues 183-202; it reads ESPDMKKEQDPPAKCHTKKH. A compositionally biased stretch (basic and acidic residues) spans 185–195; the sequence is PDMKKEQDPPA. A DNA-binding region (ETS) is located at residues 207–289; that stretch reads THLWEFIRDI…DGRRLVYKFG (83 aa).

It belongs to the ETS family.

The protein resides in the nucleus. Functionally, transcriptional activator that may play a role in regulating epithelial cell differentiation and proliferation. May act as a repressor for a specific subset of ETS/AP-1-responsive genes, and as a modulator of the nuclear response to mitogen-activated protein kinase signaling cascades. Binds to DNA sequences containing the consensus nucleotide core sequence GGAA. Involved in regulation of TNFRSF10B/DR5 expression through Ets-binding sequences on the TNFRSF10B/DR5 promoter. This Pan paniscus (Pygmy chimpanzee) protein is ETS homologous factor (EHF).